Consider the following 448-residue polypeptide: L-seryl-tRNA(Sec) selenium transferase (448 aa).

Lys-284 is modified (N6-(pyridoxal phosphate)lysine).

The protein belongs to the SelA family. Requires pyridoxal 5'-phosphate as cofactor.

The protein localises to the cytoplasm. It catalyses the reaction L-seryl-tRNA(Sec) + selenophosphate + H(+) = L-selenocysteinyl-tRNA(Sec) + phosphate. It participates in aminoacyl-tRNA biosynthesis; selenocysteinyl-tRNA(Sec) biosynthesis; selenocysteinyl-tRNA(Sec) from L-seryl-tRNA(Sec) (bacterial route): step 1/1. Converts seryl-tRNA(Sec) to selenocysteinyl-tRNA(Sec) required for selenoprotein biosynthesis. This chain is L-seryl-tRNA(Sec) selenium transferase, found in Nautilia profundicola (strain ATCC BAA-1463 / DSM 18972 / AmH).